We begin with the raw amino-acid sequence, 525 residues long: Transcriptional regulatory protein TOD6 (525 aa).

A disordered region spans residues 22-82 (GFSILSKHPH…NNPSSWDPSD (61 aa)). Residues 35 to 47 (LVHSHSLSHTNAK) show a composition bias toward polar residues. A compositionally biased stretch (basic and acidic residues) spans 61 to 71 (STNKEEAESLK). Residues 67 to 124 (AESLKKNNPSSWDPSDDIKLRHLKEIKNLGWKEIAHHFPNRTPNACQFRWRRLKSGNL) enclose the HTH myb-type domain. The H-T-H motif DNA-binding region spans 97–120 (WKEIAHHFPNRTPNACQFRWRRLK). The residue at position 280 (Ser280) is a Phosphoserine. Residues 283-308 (PSTQIPHSTTKTRKNSHSVISSRRSS) are disordered. The span at 299 to 308 (HSVISSRRSS) shows a compositional bias: low complexity. Ser333, Ser341, and Ser366 each carry phosphoserine. The interval 451-510 (TNEGCKDEEEEDDIDPLHKENGINTPSQQSQNYGMLEAKHDNPKSSELSSMTSANDIRNE) is disordered. 2 stretches are compositionally biased toward polar residues: residues 472–483 (GINTPSQQSQNY) and 495–506 (SSELSSMTSAND).

The protein belongs to the DOT6 family. As to quaternary structure, component of the RPD3C(L) complex composed of at least ASH1, CTI6, DEP1, DOT6, PHO23, RPD3, RXT2, RXT3, SAP30, SDS3, SIN3, TOD6; UME1 and UME6.

The protein localises to the cytoplasm. The protein resides in the nucleus. Component of the RPD3 histone deacetylase complex RPD3C(L) responsible for the deacetylation of lysine residues on the N-terminal part of the core histones (H2A, H2B, H3 and H4). Histone deacetylation gives a tag for epigenetic repression and plays an important role in transcriptional regulation, cell cycle progression and developmental events. TOD6 binds to sequences containing the core CGATG, which resembles the PAC (Polymerase A and C) motif. The chain is Transcriptional regulatory protein TOD6 (TOD6) from Saccharomyces cerevisiae (strain ATCC 204508 / S288c) (Baker's yeast).